The sequence spans 254 residues: 3-deoxy-manno-octulosonate cytidylyltransferase (254 aa).

This sequence belongs to the KdsB family.

The protein resides in the cytoplasm. It carries out the reaction 3-deoxy-alpha-D-manno-oct-2-ulosonate + CTP = CMP-3-deoxy-beta-D-manno-octulosonate + diphosphate. The protein operates within nucleotide-sugar biosynthesis; CMP-3-deoxy-D-manno-octulosonate biosynthesis; CMP-3-deoxy-D-manno-octulosonate from 3-deoxy-D-manno-octulosonate and CTP: step 1/1. Its pathway is bacterial outer membrane biogenesis; lipopolysaccharide biosynthesis. Its function is as follows. Activates KDO (a required 8-carbon sugar) for incorporation into bacterial lipopolysaccharide in Gram-negative bacteria. The polypeptide is 3-deoxy-manno-octulosonate cytidylyltransferase (Polynucleobacter asymbioticus (strain DSM 18221 / CIP 109841 / QLW-P1DMWA-1) (Polynucleobacter necessarius subsp. asymbioticus)).